Reading from the N-terminus, the 98-residue chain is Large ribosomal subunit protein mL53 (98 aa).

Belongs to the mitochondrion-specific ribosomal protein mL53 family. In terms of assembly, component of the mitochondrial large ribosomal subunit (mt-LSU). Mature yeast 74S mitochondrial ribosomes consist of a small (37S) and a large (54S) subunit. The 37S small subunit contains a 15S ribosomal RNA (15S mt-rRNA) and 34 different proteins. The 54S large subunit contains a 21S rRNA (21S mt-rRNA) and 46 different proteins.

It localises to the mitochondrion. Its function is as follows. Component of the mitochondrial ribosome (mitoribosome), a dedicated translation machinery responsible for the synthesis of mitochondrial genome-encoded proteins, including at least some of the essential transmembrane subunits of the mitochondrial respiratory chain. The mitoribosomes are attached to the mitochondrial inner membrane and translation products are cotranslationally integrated into the membrane. This Saccharomyces cerevisiae (strain ATCC 204508 / S288c) (Baker's yeast) protein is Large ribosomal subunit protein mL53 (MRPL44).